The chain runs to 248 residues: Phosphoribosylformylglycinamidine synthase subunit PurQ (248 aa).

Residues 6-248 (AMVLRMEGTN…IFFRILYNST (243 aa)) form the Glutamine amidotransferase type-1 domain. The Nucleophile role is filled by Cys-95. Catalysis depends on residues His-215 and Glu-217.

As to quaternary structure, part of the FGAM synthase complex composed of 1 PurL, 1 PurQ and 2 PurS subunits.

Its subcellular location is the cytoplasm. It carries out the reaction N(2)-formyl-N(1)-(5-phospho-beta-D-ribosyl)glycinamide + L-glutamine + ATP + H2O = 2-formamido-N(1)-(5-O-phospho-beta-D-ribosyl)acetamidine + L-glutamate + ADP + phosphate + H(+). The enzyme catalyses L-glutamine + H2O = L-glutamate + NH4(+). It functions in the pathway purine metabolism; IMP biosynthesis via de novo pathway; 5-amino-1-(5-phospho-D-ribosyl)imidazole from N(2)-formyl-N(1)-(5-phospho-D-ribosyl)glycinamide: step 1/2. Functionally, part of the phosphoribosylformylglycinamidine synthase complex involved in the purines biosynthetic pathway. Catalyzes the ATP-dependent conversion of formylglycinamide ribonucleotide (FGAR) and glutamine to yield formylglycinamidine ribonucleotide (FGAM) and glutamate. The FGAM synthase complex is composed of three subunits. PurQ produces an ammonia molecule by converting glutamine to glutamate. PurL transfers the ammonia molecule to FGAR to form FGAM in an ATP-dependent manner. PurS interacts with PurQ and PurL and is thought to assist in the transfer of the ammonia molecule from PurQ to PurL. The polypeptide is Phosphoribosylformylglycinamidine synthase subunit PurQ (Picrophilus torridus (strain ATCC 700027 / DSM 9790 / JCM 10055 / NBRC 100828 / KAW 2/3)).